Consider the following 224-residue polypeptide: UPF0758 protein Hhal_2301 (224 aa).

Residues 102–224 (TLSSPAQTRT…PVSLAERGVL (123 aa)) form the MPN domain. Residues H173, H175, and D186 each coordinate Zn(2+). Residues 173–186 (HNHPSGITEPSAAD) carry the JAMM motif motif.

Belongs to the UPF0758 family.

The sequence is that of UPF0758 protein Hhal_2301 from Halorhodospira halophila (strain DSM 244 / SL1) (Ectothiorhodospira halophila (strain DSM 244 / SL1)).